The primary structure comprises 300 residues: Haloalkane dehalogenase (300 aa).

Positions 32 to 155 (AIVFQHGNPT…PAVRGVFQGF (124 aa)) constitute an AB hydrolase-1 domain. Residue Asp-109 is the Nucleophile of the active site. Glu-133 functions as the Proton donor in the catalytic mechanism. The active-site Proton acceptor is His-273.

It belongs to the haloalkane dehalogenase family. Type 2 subfamily. As to quaternary structure, monomer.

The catalysed reaction is 1-haloalkane + H2O = a halide anion + a primary alcohol + H(+). Its function is as follows. Catalyzes hydrolytic cleavage of carbon-halogen bonds in halogenated aliphatic compounds, leading to the formation of the corresponding primary alcohols, halide ions and protons. The protein is Haloalkane dehalogenase of Mycobacterium tuberculosis (strain ATCC 25177 / H37Ra).